The primary structure comprises 323 residues: Lipoyl synthase (323 aa).

7 residues coordinate [4Fe-4S] cluster: Cys-53, Cys-58, Cys-64, Cys-79, Cys-83, Cys-86, and Ser-293. Positions 65–282 (WTKKQATVMI…AATARAKGFS (218 aa)) constitute a Radical SAM core domain.

Belongs to the radical SAM superfamily. Lipoyl synthase family. [4Fe-4S] cluster serves as cofactor.

Its subcellular location is the cytoplasm. The enzyme catalyses [[Fe-S] cluster scaffold protein carrying a second [4Fe-4S](2+) cluster] + N(6)-octanoyl-L-lysyl-[protein] + 2 oxidized [2Fe-2S]-[ferredoxin] + 2 S-adenosyl-L-methionine + 4 H(+) = [[Fe-S] cluster scaffold protein] + N(6)-[(R)-dihydrolipoyl]-L-lysyl-[protein] + 4 Fe(3+) + 2 hydrogen sulfide + 2 5'-deoxyadenosine + 2 L-methionine + 2 reduced [2Fe-2S]-[ferredoxin]. Its pathway is protein modification; protein lipoylation via endogenous pathway; protein N(6)-(lipoyl)lysine from octanoyl-[acyl-carrier-protein]: step 2/2. In terms of biological role, catalyzes the radical-mediated insertion of two sulfur atoms into the C-6 and C-8 positions of the octanoyl moiety bound to the lipoyl domains of lipoate-dependent enzymes, thereby converting the octanoylated domains into lipoylated derivatives. The chain is Lipoyl synthase from Zymomonas mobilis subsp. mobilis (strain ATCC 31821 / ZM4 / CP4).